A 146-amino-acid polypeptide reads, in one-letter code: Hemoglobin subunit beta (146 aa).

N-acetylvaline is present on V1. In terms of domain architecture, Globin spans 2–146 (HLSAEEKAAV…VANALAHKYH (145 aa)). Phosphothreonine is present on T12. Position 44 is a phosphoserine (S44). K59 carries the post-translational modification N6-acetyllysine. Position 63 (H63) interacts with heme b. Residue K82 is modified to N6-acetyllysine. Position 92 (H92) interacts with heme b. C93 is modified (S-nitrosocysteine). K144 is subject to N6-acetyllysine.

Belongs to the globin family. Heterotetramer of two alpha chains and two beta chains. Red blood cells.

Functionally, involved in oxygen transport from the lung to the various peripheral tissues. The chain is Hemoglobin subunit beta (HBB) from Ctenodactylus gundi (Northern gundi).